We begin with the raw amino-acid sequence, 309 residues long: Probable inactive poly [ADP-ribose] polymerase SRO5 (309 aa).

The region spanning 28–255 (CDSSSDRSFA…AFPVLIKALS (228 aa)) is the PARP catalytic domain. Positions 238–309 (KRLRSPWMAF…IKACGHKVQH (72 aa)) constitute an RST domain.

In terms of assembly, interacts with dehydration-responsive DREB2 proteins and a number of transcription factors belonging to several protein families.

It localises to the nucleus matrix. Its function is as follows. Probable inactive ADP-ribosyltransferase that may be involved in stress and developmental responses. This is Probable inactive poly [ADP-ribose] polymerase SRO5 (SRO5) from Arabidopsis thaliana (Mouse-ear cress).